Reading from the N-terminus, the 1157-residue chain is Nitric oxide synthase, inducible (1157 aa).

The short motif at 23–27 (DINNN) is the DINNN-motif; mediates interaction with SPSB1, SPSB2 and SPSB4 element. Residues 29–64 (EKLRQASSSPVTQDDPKCPSRSRHRNECSQPLAETA) are disordered. Cysteine 110 and cysteine 115 together coordinate Zn(2+). Cysteine 200 lines the heme b pocket. Glutamine 263, tryptophan 372, tyrosine 373, and glutamate 377 together coordinate L-arginine. (6R)-L-erythro-5,6,7,8-tetrahydrobiopterin is bound by residues arginine 381, isoleucine 462, tryptophan 463, and phenylalanine 476. Tyrosine 491 serves as a coordination point for heme b. The interval 515–535 (FKVLVKAVLFAAVLMHKTMAA) is calmodulin-binding. The region spanning 539-677 (ATILFATETG…AFRGWAVQTF (139 aa)) is the Flavodoxin-like domain. Residues threonine 545, glutamate 546, threonine 547, arginine 549, serine 550, serine 591, threonine 592, serine 628, cysteine 635, glutamate 661, and glutamine 665 each contribute to the FMN site. Positions 730-970 (KYVFSMRLKS…VRSASGFQLP (241 aa)) constitute an FAD-binding FR-type domain. Arginine 750 lines the NADP(+) pocket. Residues histidine 772, arginine 906, tyrosine 908, serine 909, threonine 924, and alanine 926 each contribute to the FAD site. Threonine 929 contributes to the NADP(+) binding site. Positions 930, 943, 944, and 945 each coordinate FAD. NADP(+) is bound by residues threonine 984, arginine 1017, serine 1046, arginine 1047, lysine 1053, tyrosine 1055, glutamine 1057, and aspartate 1090. Residues 1138-1157 (KEGAVGPPSDPRAPGAHGKS) are disordered.

This sequence belongs to the NOS family. Homodimer. Interacts with NHERF1. Interacts with GAPDH; induced by oxidatively-modified low-densitity lipoprotein (LDL(ox)). Interacts with S100A8 and S100A9 to form the iNOS-S100A8/9 transnitrosylase complex. Interacts with SPSB1, SPSB2 and SPSB4. Interacts with ELOC and CUL5 in the presence of SPSB1 or SPSB2 or SPSB4. Forms a complex with ASL, ASS1 and HSP90AA1; the complex regulates cell-autonomous L-arginine synthesis and citrulline recycling while channeling extracellular L-arginine to nitric oxide synthesis pathway. Heme b serves as cofactor. FAD is required as a cofactor. The cofactor is FMN. Requires (6R)-L-erythro-5,6,7,8-tetrahydrobiopterin as cofactor. Post-translationally, polyubiquitinated; mediated by SPSB1, SPSB2 and SPSB4, leading to proteasomal degradation. In terms of tissue distribution, detected in both stimulated and unstimulated immune cells and macrophages with little or no up-regulation following cellular stimulation with lipopolysaccharides (LPS) or concanavalin A (ConA).

The protein localises to the cytoplasm. The protein resides in the cytosol. It catalyses the reaction 2 L-arginine + 3 NADPH + 4 O2 + H(+) = 2 L-citrulline + 2 nitric oxide + 3 NADP(+) + 4 H2O. Not stimulated by calcium/calmodulin. Functionally, produces nitric oxide (NO) which is a messenger molecule with diverse functions throughout the body. In macrophages, NO mediates tumoricidal and bactericidal actions. Also has nitrosylase activity and mediates cysteine S-nitrosylation of cytoplasmic target proteins such PTGS2/COX2. As component of the iNOS-S100A8/9 transnitrosylase complex involved in the selective inflammatory stimulus-dependent S-nitrosylation of GAPDH implicated in regulation of the GAIT complex activity and probably multiple targets including ANXA5, EZR, MSN and VIM. Involved in inflammation, enhances the synthesis of pro-inflammatory mediators such as IL6 and IL8. This Sus scrofa (Pig) protein is Nitric oxide synthase, inducible (NOS2).